The sequence spans 577 residues: Proline--tRNA ligase (577 aa).

This sequence belongs to the class-II aminoacyl-tRNA synthetase family. ProS type 1 subfamily. Homodimer.

The protein localises to the cytoplasm. It catalyses the reaction tRNA(Pro) + L-proline + ATP = L-prolyl-tRNA(Pro) + AMP + diphosphate. Its function is as follows. Catalyzes the attachment of proline to tRNA(Pro) in a two-step reaction: proline is first activated by ATP to form Pro-AMP and then transferred to the acceptor end of tRNA(Pro). As ProRS can inadvertently accommodate and process non-cognate amino acids such as alanine and cysteine, to avoid such errors it has two additional distinct editing activities against alanine. One activity is designated as 'pretransfer' editing and involves the tRNA(Pro)-independent hydrolysis of activated Ala-AMP. The other activity is designated 'posttransfer' editing and involves deacylation of mischarged Ala-tRNA(Pro). The misacylated Cys-tRNA(Pro) is not edited by ProRS. The chain is Proline--tRNA ligase from Herminiimonas arsenicoxydans.